Consider the following 300-residue polypeptide: Geranylgeranyl pyrophosphate synthase (300 aa).

Met1 carries the post-translational modification N-acetylmethionine. Isopentenyl diphosphate-binding residues include Lys25, Arg28, and His57. Mg(2+) contacts are provided by Asp64 and Asp68. Dimethylallyl diphosphate is bound at residue Arg73. Residue Arg74 coordinates isopentenyl diphosphate. The dimethylallyl diphosphate site is built by Lys151, Thr152, Gln185, Lys202, and Lys212.

This sequence belongs to the FPP/GGPP synthase family. In terms of assembly, homohexamer; trimer of homodimers. Mg(2+) is required as a cofactor.

It is found in the cytoplasm. It localises to the perinuclear region. The protein resides in the myofibril. Its subcellular location is the sarcomere. The protein localises to the z line. It catalyses the reaction isopentenyl diphosphate + dimethylallyl diphosphate = (2E)-geranyl diphosphate + diphosphate. The catalysed reaction is isopentenyl diphosphate + (2E)-geranyl diphosphate = (2E,6E)-farnesyl diphosphate + diphosphate. The enzyme catalyses isopentenyl diphosphate + (2E,6E)-farnesyl diphosphate = (2E,6E,10E)-geranylgeranyl diphosphate + diphosphate. It participates in isoprenoid biosynthesis; farnesyl diphosphate biosynthesis; farnesyl diphosphate from geranyl diphosphate and isopentenyl diphosphate: step 1/1. It functions in the pathway isoprenoid biosynthesis; geranyl diphosphate biosynthesis; geranyl diphosphate from dimethylallyl diphosphate and isopentenyl diphosphate: step 1/1. Its pathway is isoprenoid biosynthesis; geranylgeranyl diphosphate biosynthesis; geranylgeranyl diphosphate from farnesyl diphosphate and isopentenyl diphosphate: step 1/1. Its function is as follows. Catalyzes the trans-addition of the three molecules of IPP onto DMAPP to form geranylgeranyl pyrophosphate, an important precursor of carotenoids and geranylated proteins. This Rattus norvegicus (Rat) protein is Geranylgeranyl pyrophosphate synthase (Ggps1).